A 1159-amino-acid polypeptide reads, in one-letter code: PAN2-PAN3 deadenylation complex catalytic subunit pan2 (1159 aa).

The WD repeat unit spans residues 276–315 (ANVSFMLGIDISPSGEALAINDAECMVHLWGSPAKIHFNE). Positions 316-451 (MSKEVELADV…GAKLNGEAED (136 aa)) are linker. The 370-residue stretch at 452-821 (DPLLKYSNVE…VPCVLAFQVK (370 aa)) folds into the USP domain. The Exonuclease domain maps to 872 to 1048 (LDTEFVDLEK…IEDARMALRL (177 aa)). Aspartate 873, glutamate 875, aspartate 982, and aspartate 1041 together coordinate a divalent metal cation. The disordered stretch occupies residues 1094–1159 (TAVTMQNTNS…GDFFGGSPLK (66 aa)). A compositionally biased stretch (polar residues) spans 1096 to 1106 (VTMQNTNSGRN). Low complexity predominate over residues 1107-1128 (TPTVPDAAGAPAVPASAPTTPG). Over residues 1143–1153 (TFSGPGAGDFF) the composition is skewed to gly residues.

It belongs to the peptidase C19 family. PAN2 subfamily. As to quaternary structure, forms a heterotrimer with an asymmetric homodimer of the regulatory subunit pan3 to form the poly(A)-nuclease (PAN) deadenylation complex. Requires a divalent metal cation as cofactor.

Its subcellular location is the cytoplasm. It carries out the reaction Exonucleolytic cleavage of poly(A) to 5'-AMP.. Its activity is regulated as follows. Positively regulated by the regulatory subunit pan3. In terms of biological role, catalytic subunit of the poly(A)-nuclease (PAN) deadenylation complex, one of two cytoplasmic mRNA deadenylases involved in mRNA turnover. PAN specifically shortens poly(A) tails of RNA and the activity is stimulated by poly(A)-binding protein pab1. PAN deadenylation is followed by rapid degradation of the shortened mRNA tails by the CCR4-NOT complex. Deadenylated mRNAs are then degraded by two alternative mechanisms, namely exosome-mediated 3'-5' exonucleolytic degradation, or deadenylation-dependent mRNA decaping and subsequent 5'-3' exonucleolytic degradation by xrn1. May also be involved in post-transcriptional maturation of mRNA poly(A) tails. The polypeptide is PAN2-PAN3 deadenylation complex catalytic subunit pan2 (Aspergillus terreus (strain NIH 2624 / FGSC A1156)).